The primary structure comprises 461 residues: MLKIFNTLSRQKEEFKPIHAGKVGMYVCGITIYDLCHIGHGRTFVAFDVVARYLRYLGYSLTYVRNVTDVDDKIIKRAIENNETCEQLTTRMLAEMHKDFDALNLERPDLEPRATHHIAEIIEMTERLIARGHAYVASNGDVMFAVDSDPDYGVLSRQDLDQLQAGARVEVADVKRNPMDFVLWKMSKPGEPRWESPWGPGRPGWHIECSAMNGKQLGAHFDIHGGGSDLMFPHHENEIAQSTCAHDGPYVNYWMHSGMVMIDKEKMSKSLNNFFTIRDVLAYYDAETVRYFLMSGHYRSQLNYSEENLKQARASLERLYTALRGTDANATPAGGAEFEARFRTAMDDDFNTPEAYSVLFDIAREVNRLKNEDMAAANGLAAELRKLAQVLGLLEQDPELFLQGGAQADDDEVAKIEALIKQRNDARSSKNWALADAARDQLNELGIVLEDGPQGTTWRRK.

Cys-28 serves as a coordination point for Zn(2+). The 'HIGH' region signature appears at 30 to 40 (ITIYDLCHIGH). Zn(2+) is bound by residues Cys-209, His-234, and Glu-238. Residues 266-270 (KMSKS) carry the 'KMSKS' region motif. Lys-269 serves as a coordination point for ATP.

This sequence belongs to the class-I aminoacyl-tRNA synthetase family. Monomer. Requires Zn(2+) as cofactor.

Its subcellular location is the cytoplasm. It carries out the reaction tRNA(Cys) + L-cysteine + ATP = L-cysteinyl-tRNA(Cys) + AMP + diphosphate. This is Cysteine--tRNA ligase from Yersinia pestis bv. Antiqua (strain Antiqua).